The following is a 153-amino-acid chain: Putative ubiquitin-conjugating enzyme E2 N-like (153 aa).

The 148-residue stretch at 3-150 (ELPHRIIKET…ARAWTRLYAM (148 aa)) folds into the UBC core domain. Lys-83 bears the N6-acetyllysine mark.

Belongs to the ubiquitin-conjugating enzyme family. Expressed in epididymis (at protein level).

The chain is Putative ubiquitin-conjugating enzyme E2 N-like (UBE2NL) from Homo sapiens (Human).